The sequence spans 268 residues: Small ribosomal subunit protein eS1 (268 aa).

The interval 1–21 is disordered; it reads MAVGKNKGLSKGGKKGGKKKV.

The protein belongs to the eukaryotic ribosomal protein eS1 family. As to quaternary structure, component of the small ribosomal subunit. Mature ribosomes consist of a small (40S) and a large (60S) subunit. The 40S subunit contains about 33 different proteins and 1 molecule of RNA (18S). The 60S subunit contains about 49 different proteins and 3 molecules of RNA (28S, 5.8S and 5S).

It localises to the cytoplasm. In terms of biological role, essential for oogenesis; required for late follicle cell development. This Drosophila virilis (Fruit fly) protein is Small ribosomal subunit protein eS1.